The following is a 148-amino-acid chain: [Ribosomal protein bS18]-alanine N-acetyltransferase (148 aa).

Positions 2–147 constitute an N-acetyltransferase domain; it reads NTISSLETTD…DAIIMALPIS (146 aa). 69-71 is an acetyl-CoA binding site; the sequence is IAV. Glu103 acts as the Proton acceptor in catalysis. Acetyl-CoA is bound at residue Asn108. The active-site Proton donor is Tyr115.

The protein belongs to the acetyltransferase family. RimI subfamily.

It is found in the cytoplasm. It catalyses the reaction N-terminal L-alanyl-[ribosomal protein bS18] + acetyl-CoA = N-terminal N(alpha)-acetyl-L-alanyl-[ribosomal protein bS18] + CoA + H(+). Its function is as follows. Acetylates the N-terminal alanine of ribosomal protein bS18. This chain is [Ribosomal protein bS18]-alanine N-acetyltransferase, found in Escherichia coli O157:H7.